The primary structure comprises 363 residues: Inactive CLIP domain-containing serine protease A8 (363 aa).

Positions 1–25 (MPSWWCCCCLVVLLYAQRMIVPSSA) are cleaved as a signal peptide. Residues 33 to 82 (LQECPGGFCSPKYLCPNGTYNEANAQNQEIIMLRFGEEDVCQDYMQVCCS) enclose the Clip domain. Intrachain disulfides connect Cys36/Cys80, Cys41/Cys73, and Cys47/Cys81. 4 N-linked (GlcNAc...) asparagine glycosylation sites follow: Asn49, Asn83, Asn117, and Asn166. A Peptidase S1 domain is found at 114-360 (VEGNRTYAQY…FVTWINATIE (247 aa)). Cystine bridges form between Cys245-Cys317, Cys276-Cys297, and Cys307-Cys336. Asn319 and Asn356 each carry an N-linked (GlcNAc...) asparagine glycan.

Belongs to the peptidase S1 family. CLIP subfamily. In terms of assembly, heterodimer of a light chain and a heavy chain; disulfide-linked. In terms of processing, secreted as a full-length protein. Proteolytically cleaved into two chains which remain covalently linked. Cleavage is induced by Gram-positive or Gram-negative bacteria infection.

The protein resides in the secreted. In terms of biological role, inactive serine protease which plays an essential role in the innate immune response against bacteria, fungi and protozoa infection by activating the melanization cascade. In the melanization cascade, acts downstream of TEP1 and SPCLIP1 to promote CLIPA28 and CLIPC9 proteolytic cleavage and CLIPC9 recruitment to microbial surfaces. In the resistant strain L3-5, required for the melanization of killed parasite P.berghei ookinetes which results in their clearance. In the susceptible strain G3, appears to be dispensable for ookinete elimination which occurs by lysis. Required for the melanization of Gram-positive and Gram-negative bacteria. During the late stage of fungus B.bassiana-mediated infection, required for the initiation of hyphae melanization by promoting prophenoloxidase PPO activation. The sequence is that of Inactive CLIP domain-containing serine protease A8 from Anopheles gambiae (African malaria mosquito).